The chain runs to 172 residues: Disulfide bond formation protein B (172 aa).

The Cytoplasmic portion of the chain corresponds to 1-11 (MNPFRWGFRAQ). A helical transmembrane segment spans residues 12 to 28 (FLLGFLACAGLLAYAIY). Topologically, residues 29-46 (VQLHLGLEPCPLCIFQRI) are periplasmic. The cysteines at positions 38 and 41 are disulfide-linked. The helical transmembrane segment at 47-63 (AFATLALLFLLGALHGP) threads the bilayer. Residues 64–70 (RGAGGRK) are Cytoplasmic-facing. Residues 71 to 88 (AYGVLAFIAAGVGMGIAA) traverse the membrane as a helical segment. Residues 89 to 145 (RHVWVQIRPKDMMSSCGPPLSFLSETMGPFEVFRTVLTGTGDCGNIDWRFLGLSMPM) are Periplasmic-facing. An intrachain disulfide couples Cys-104 to Cys-131. The helical transmembrane segment at 146-164 (WSMVWFVGLALWALYAGFK) threads the bilayer. The Cytoplasmic portion of the chain corresponds to 165–172 (HRGPRKLF).

The protein belongs to the DsbB family.

The protein resides in the cell inner membrane. Its function is as follows. Required for disulfide bond formation in some periplasmic proteins. Acts by oxidizing the DsbA protein. In Xanthomonas campestris pv. campestris (strain 8004), this protein is Disulfide bond formation protein B.